Reading from the N-terminus, the 210-residue chain is Adenylate kinase (210 aa).

10–15 contacts ATP; it reads GSGKGT. The segment at 28-57 is NMP; sequence SVGKVLRTVMESNTAEADVVKKFIKSGKLV. Residues Arg-34, 55 to 57, 83 to 86, and Gln-90 contribute to the AMP site; these read KLV and GYPR. The interval 120–158 is LID; it reads GRISCTDCGTIYNKLYCMPKINGVCDICNSSSFQNRVDD. Position 121 (Arg-121) interacts with ATP. Positions 124 and 127 each coordinate Zn(2+). 130 to 131 is an ATP binding site; the sequence is IY. Positions 144 and 147 each coordinate Zn(2+). The AMP site is built by Arg-155 and Arg-166. Gln-194 serves as a coordination point for ATP.

The protein belongs to the adenylate kinase family. In terms of assembly, monomer.

It localises to the cytoplasm. The enzyme catalyses AMP + ATP = 2 ADP. The protein operates within purine metabolism; AMP biosynthesis via salvage pathway; AMP from ADP: step 1/1. Catalyzes the reversible transfer of the terminal phosphate group between ATP and AMP. Plays an important role in cellular energy homeostasis and in adenine nucleotide metabolism. This Orientia tsutsugamushi (strain Boryong) (Rickettsia tsutsugamushi) protein is Adenylate kinase.